The following is a 1732-amino-acid chain: Polycystin-1-like protein 3 (1732 aa).

The signal sequence occupies residues 1–23 (MFFKGGSWLWLYIRTSIILGSEL). Topologically, residues 24–697 (NSPAPHGQNN…IKLFLRVTNN (674 aa)) are extracellular. The region spanning 30-138 (GQNNCYQLNR…CLLKYYFICQ (109 aa)) is the C-type lectin domain. 2 disulfides stabilise this stretch: C51/C137 and C112/C129. N-linked (GlcNAc...) asparagine glycans are attached at residues N286, N363, N515, N537, and N575. The GAIN-B domain maps to 523–685 (TSLNMSTHQL…FVVPRTVNVE (163 aa)). 2 disulfides stabilise this stretch: C635-C663 and C650-C665. The GPS stretch occupies residues 635-685 (CYYWEIHNQTWSSAGCQVGPQSTILRTQCLCNHLTFFASDFFVVPRTVNVE). Residues 698–718 (PVGVSLLASLLGFYVITVVWA) traverse the membrane as a helical segment. Topologically, residues 719 to 905 (RKKDQADMQK…PWNQFTRVQR (187 aa)) are cytoplasmic. One can recognise a PLAT domain in the interval 743 to 860 (FHYLIQVYTG…GDCELDRVFI (118 aa)). A helical transmembrane segment spans residues 906–926 (LSCCMTLLLCNMVINVMFWKI). Over 927–939 (NSTTAKRDEQMRP) the chain is Extracellular. Residues 940-960 (FAVAWSELLVSIHTAVILFPI) form a helical membrane-spanning segment. Over 961-1154 (NLVIGRLFPL…ISNGLSKWLT (194 aa)) the chain is Cytoplasmic. A helical membrane pass occupies residues 1155–1175 (SVCWLLLGFTSLASAFFTALY). The Extracellular segment spans residues 1176 to 1198 (SLELSKDQATSWMISIILSVLQN). A helical membrane pass occupies residues 1199-1219 (IFISQPVKVVFFTFLYSLMMS). Residues 1220 to 1289 (RMPRLNKENE…KLTGDILVQI (70 aa)) lie on the Cytoplasmic side of the membrane. A helical membrane pass occupies residues 1290 to 1300 (LFLTLLMTAIY). The Extracellular segment spans residues 1301–1461 (SAKNSNRFYL…SFTSLQMSKK (161 aa)). Residues 1462 to 1491 (GCVWSIISQVIYYLLVCYYAFIQGCQLKQQ) form a helical membrane-spanning segment. At 1492-1500 (KWRFFTGKR) the chain is on the cytoplasmic side. Residues 1501–1519 (NILDTSIILISFILLGLDM) traverse the membrane as a helical segment. The Extracellular portion of the chain corresponds to 1520-1550 (KSISLHKKNMARYRDDQDRFISFYEAVKVNS). The helical transmembrane segment at 1551 to 1572 (AATHLVGFPVLLATVQLWNLLR) threads the bilayer. The Cytoplasmic segment spans residues 1573 to 1589 (HSPRLRVISRTLSRAWD). Residues 1590–1614 (EVVGFLLIILILLTGYAIAFNLLFG) form a helical membrane-spanning segment. The interval 1613–1651 (FGCSISDYRTFFSSAVTVVGLLMGISHQEEVFALDPVLG) is channel pore-region. Residues 1615 to 1647 (CSISDYRTFFSSAVTVVGLLMGISHQEEVFALD) are Extracellular-facing. A helical transmembrane segment spans residues 1648-1667 (PVLGTFLILTSVILMVLVVI). The Cytoplasmic portion of the chain corresponds to 1668 to 1732 (NLFVSAILMA…SDTEVLDELP (65 aa)).

This sequence belongs to the polycystin family. Heterotetramer with PKD2L1, composed of 3 subunit of PKD2L1 and 1 subunit of PKD1L3. Post-translationally, autoproteolytically processed at the GPS region of the GAIN-B domain; this cleavage modulates receptor activity. Highly expressed in placenta, weakly in heart and lung.

The protein localises to the cell membrane. The catalysed reaction is Ca(2+)(in) = Ca(2+)(out). The enzyme catalyses Na(+)(in) = Na(+)(out). It catalyses the reaction K(+)(in) = K(+)(out). It carries out the reaction Mg(2+)(in) = Mg(2+)(out). Its activity is regulated as follows. The non-selective cation channel is gated following an off-response property by acid: gated open after the removal of acid stimulus, but not during acid application. Regulation of non-selective cation channel activity by external Ca(2+) is bimodal, first sensitizing and subsequently inactivating the current. Its function is as follows. Pore-forming subunit of a heterotetrameric, non-selective cation channel that is permeable to Ca(2+). Also shows permeability towards NA(1+), K(+) and Mg(2+). Heterotetrameric complex channel is activated by external low pH and Ca(2+), but opens only when the extracellular pH rises again and after the removal of acid stimulus. May act as a sour taste receptor in gustatory cells; however, its contribution to sour taste perception is unclear in vivo and may be indirect. This Homo sapiens (Human) protein is Polycystin-1-like protein 3.